The sequence spans 382 residues: Mannitol-1-phosphate 5-dehydrogenase (382 aa).

Position 3-14 (3-14 (VLHFGAGNIGRG)) interacts with NAD(+).

Belongs to the mannitol dehydrogenase family.

The catalysed reaction is D-mannitol 1-phosphate + NAD(+) = beta-D-fructose 6-phosphate + NADH + H(+). The polypeptide is Mannitol-1-phosphate 5-dehydrogenase (Sodalis glossinidius (strain morsitans)).